Consider the following 70-residue polypeptide: Large ribosomal subunit protein eL38 (70 aa).

K4 participates in a covalent cross-link: Glycyl lysine isopeptide (Lys-Gly) (interchain with G-Cter in SUMO2). K9 is modified (N6-acetyllysine; alternate). K9 participates in a covalent cross-link: Glycyl lysine isopeptide (Lys-Gly) (interchain with G-Cter in SUMO2); alternate. At K67 the chain carries N6-acetyllysine.

It belongs to the eukaryotic ribosomal protein eL38 family. As to quaternary structure, component of the large ribosomal subunit.

It is found in the cytoplasm. In terms of biological role, component of the large ribosomal subunit. The ribosome is a large ribonucleoprotein complex responsible for the synthesis of proteins in the cell. The protein is Large ribosomal subunit protein eL38 (Rpl38) of Mus musculus (Mouse).